The following is a 1147-amino-acid chain: Probable phospholipid-transporting ATPase IIB (1147 aa).

The Cytoplasmic portion of the chain corresponds to 1–146 (MADQIPLYPV…NQKYNVFTFI (146 aa)). Residues 147–168 (PGVLYEQFKFFLNLYFLVISCS) traverse the membrane as a helical segment. The Extracellular segment spans residues 169–173 (QFVPA). The helical transmembrane segment at 174–196 (LKIGYLYTYWAPLGFVLAVTMTR) threads the bilayer. Over 197 to 380 (EAIDEFRRFQ…GLLDLELNRL (184 aa)) the chain is Cytoplasmic. A helical transmembrane segment spans residues 381–401 (TKALFLALVALSIVMVTLQGF). The Extracellular segment spans residues 402-409 (VGPWYRNL). Residues 410–431 (FRFLLLFSYIIPISLRVNLDMG) traverse the membrane as a helical segment. Residues 432–930 (KAVYGWMMMK…GRNSYKRSAA (499 aa)) lie on the Cytoplasmic side of the membrane. Aspartate 468 acts as the 4-aspartylphosphate intermediate in catalysis. ATP is bound by residues aspartate 468, lysine 469, and threonine 470. Residue aspartate 468 participates in Mg(2+) binding. Mg(2+) is bound at residue threonine 470. The interval 503 to 535 (RDSYSQMQSQAGGNNTGSTPLRKAQSSAPKVRK) is disordered. The span at 505 to 530 (SYSQMQSQAGGNNTGSTPLRKAQSSA) shows a compositional bias: polar residues. ATP is bound by residues glutamate 591, phenylalanine 633, lysine 638, lysine 657, arginine 686, threonine 687, threonine 766, glycine 767, aspartate 768, arginine 848, and lysine 854. Position 874 (aspartate 874) interacts with Mg(2+). Asparagine 877 and aspartate 878 together coordinate ATP. Mg(2+) is bound at residue aspartate 878. The helical transmembrane segment at 931 to 951 (LGQFVMHRGLIISTMQAVFSS) threads the bilayer. Over 952-963 (VFYFASVPLYQG) the chain is Extracellular. Residues 964 to 982 (FLMVGYATIYTMFPVFSLV) form a helical membrane-spanning segment. The Cytoplasmic portion of the chain corresponds to 983–1012 (LDQDVKPEMAMLYPELYKDLTKGRSLSFKT). Residues 1013 to 1031 (FLIWVLISIYQGGILMYGA) traverse the membrane as a helical segment. Residues 1032–1038 (LVLFESE) are Extracellular-facing. The helical transmembrane segment at 1039–1061 (FVHVVAISFTALILTELLMVALT) threads the bilayer. Topologically, residues 1062–1067 (VRTWHW) are cytoplasmic. A helical transmembrane segment spans residues 1068–1088 (LMVVAEFLSLGCYVSSLAFLN). At 1089-1105 (EYFGIGRVSFGAFLDVA) the chain is on the extracellular side. The chain crosses the membrane as a helical span at residues 1106–1130 (FITTVTFLWKVSAITVVSCLPLYVL). Over 1131–1147 (KYLRRKLSPPSYCKLAS) the chain is Cytoplasmic.

Belongs to the cation transport ATPase (P-type) (TC 3.A.3) family. Type IV subfamily. Mg(2+) serves as cofactor.

It is found in the golgi apparatus. It localises to the trans-Golgi network membrane. It catalyses the reaction ATP + H2O + phospholipidSide 1 = ADP + phosphate + phospholipidSide 2.. In Homo sapiens (Human), this protein is Probable phospholipid-transporting ATPase IIB (ATP9B).